We begin with the raw amino-acid sequence, 242 residues long: MLSCFRLLSRHISPSLASLRPVRCCFALPLRWAPGRPLDPRQIAPRRPLAAAASSRDPTGPAAGPSRVRQNFHPDSEAAINRQINLELYASYVYLSMAYYFSRDDVALNNFSRYFLHQSREETEHAEKLMRLQNQRGGRIRLQDIKKPEQDDWESGLHAMECALLLEKNVNQSLLELHALASDKGDPHLCDFLETYYLNEQVKSIKELGDHVHNLVKMGAPDAGLAEYLFDTHTLGNENKQN.

A mitochondrion-targeting transit peptide spans 1 to 49 (MLSCFRLLSRHISPSLASLRPVRCCFALPLRWAPGRPLDPRQIAPRRPL). A compositionally biased stretch (low complexity) spans 47 to 58 (RPLAAAASSRDP). Residues 47 to 71 (RPLAAAASSRDPTGPAAGPSRVRQN) are disordered. One can recognise a Ferritin-like diiron domain in the interval 70–219 (QNFHPDSEAA…DHVHNLVKMG (150 aa)). Fe cation contacts are provided by Glu-87, Glu-122, His-125, Glu-167, and Gln-201.

The protein belongs to the ferritin family. Homooligomer of 24 subunits. The functional molecule is roughly spherical and contains a central cavity into which the polymeric mineral iron core is deposited. As to expression, detected in testis and erythroleukemia. Expression is very low or not detectable in brain, colon, heart, kidney, liver, lung, muscle, placental, spleen and small intestine.

It is found in the mitochondrion. It carries out the reaction 4 Fe(2+) + O2 + 4 H(+) = 4 Fe(3+) + 2 H2O. Functionally, catalyzes the oxidation of ferrous iron(II) to ferric iron(III) and stores iron in a soluble, non-toxic, readily available form. Important for iron homeostasis. Iron is taken up in the ferrous form and deposited as ferric hydroxides after oxidation. The polypeptide is Ferritin, mitochondrial (Homo sapiens (Human)).